The chain runs to 102 residues: Aspartyl/glutamyl-tRNA(Asn/Gln) amidotransferase subunit C (102 aa).

It belongs to the GatC family. As to quaternary structure, heterotrimer of A, B and C subunits.

It catalyses the reaction L-glutamyl-tRNA(Gln) + L-glutamine + ATP + H2O = L-glutaminyl-tRNA(Gln) + L-glutamate + ADP + phosphate + H(+). The catalysed reaction is L-aspartyl-tRNA(Asn) + L-glutamine + ATP + H2O = L-asparaginyl-tRNA(Asn) + L-glutamate + ADP + phosphate + 2 H(+). In terms of biological role, allows the formation of correctly charged Asn-tRNA(Asn) or Gln-tRNA(Gln) through the transamidation of misacylated Asp-tRNA(Asn) or Glu-tRNA(Gln) in organisms which lack either or both of asparaginyl-tRNA or glutaminyl-tRNA synthetases. The reaction takes place in the presence of glutamine and ATP through an activated phospho-Asp-tRNA(Asn) or phospho-Glu-tRNA(Gln). This chain is Aspartyl/glutamyl-tRNA(Asn/Gln) amidotransferase subunit C, found in Bordetella parapertussis (strain 12822 / ATCC BAA-587 / NCTC 13253).